The sequence spans 54 residues: Small, acid-soluble spore protein gamma-type (54 aa).

Residues 1-54 (MAKKNRNKQQQEMQQQQQQHQAEFANEFAEGSSAEQARQQQQKAAGKRQKKNQQ) form a disordered region. Low complexity-rich tracts occupy residues 10-21 (QQEMQQQQQQHQ) and 29-44 (AEGSSAEQARQQQQKA). Residues 45-54 (AGKRQKKNQQ) show a composition bias toward basic residues.

The protein belongs to the gamma-type SASP family.

Functionally, SASP are proteins degraded in the first minutes of spore germination and provide amino acids for both new protein synthesis and metabolism. These proteins may be involved in dormant spore's high resistance to UV light. This chain is Small, acid-soluble spore protein gamma-type (sspA), found in Alkalihalophilus pseudofirmus (strain ATCC BAA-2126 / JCM 17055 / OF4) (Bacillus pseudofirmus).